The primary structure comprises 200 residues: LexA repressor (200 aa).

The H-T-H motif DNA-binding region spans 28–48 (RAEIAQHFGFSSPNAAEQHLK). Active-site for autocatalytic cleavage activity residues include S117 and K154.

This sequence belongs to the peptidase S24 family. Homodimer.

It catalyses the reaction Hydrolysis of Ala-|-Gly bond in repressor LexA.. Its function is as follows. Represses a number of genes involved in the response to DNA damage (SOS response), including recA and lexA. In the presence of single-stranded DNA, RecA interacts with LexA causing an autocatalytic cleavage which disrupts the DNA-binding part of LexA, leading to derepression of the SOS regulon and eventually DNA repair. This is LexA repressor from Thiobacillus denitrificans (strain ATCC 25259 / T1).